Reading from the N-terminus, the 154-residue chain is Nitrogen regulatory protein (154 aa).

Positions Q6–V150 constitute a PTS EIIA type-2 domain. The active-site Tele-phosphohistidine intermediate is H68.

It is found in the cytoplasm. Its function is as follows. Seems to have a role in regulating nitrogen assimilation. The sequence is that of Nitrogen regulatory protein (ptsN) from Pseudomonas aeruginosa (strain ATCC 15692 / DSM 22644 / CIP 104116 / JCM 14847 / LMG 12228 / 1C / PRS 101 / PAO1).